Here is a 456-residue protein sequence, read N- to C-terminus: UDP-N-acetylglucosamine 1-carboxyvinyltransferase (456 aa).

Residue 34 to 35 (KN) coordinates phosphoenolpyruvate. Arg-104 lines the UDP-N-acetyl-alpha-D-glucosamine pocket. The active-site Proton donor is Cys-128. Cys-128 carries the post-translational modification 2-(S-cysteinyl)pyruvic acid O-phosphothioketal. Positions 319 and 341 each coordinate UDP-N-acetyl-alpha-D-glucosamine.

This sequence belongs to the EPSP synthase family. MurA subfamily.

It localises to the cytoplasm. It catalyses the reaction phosphoenolpyruvate + UDP-N-acetyl-alpha-D-glucosamine = UDP-N-acetyl-3-O-(1-carboxyvinyl)-alpha-D-glucosamine + phosphate. It functions in the pathway cell wall biogenesis; peptidoglycan biosynthesis. In terms of biological role, cell wall formation. Adds enolpyruvyl to UDP-N-acetylglucosamine. The sequence is that of UDP-N-acetylglucosamine 1-carboxyvinyltransferase from Prochlorococcus marinus (strain MIT 9312).